Consider the following 604-residue polypeptide: ATP-dependent RNA helicase dbp6 (604 aa).

Residues Met-1–Glu-16 show a composition bias toward basic and acidic residues. Disordered stretches follow at residues Met-1 to Ala-37 and Phe-51 to Asp-70. Residues Phe-51–Lys-60 show a composition bias toward low complexity. The Q motif signature appears at Gly-149–Leu-157. The Helicase ATP-binding domain maps to Gly-167–Val-379. Residue Ala-180–Thr-187 coordinates ATP. The DEAD box motif lies at Asp-292–Asp-295. The Helicase C-terminal domain occupies Thr-406–Ser-573.

It belongs to the DEAD box helicase family. DDX51/DBP6 subfamily. As to quaternary structure, associated with pre-ribosomal particles.

The protein resides in the nucleus. The protein localises to the nucleolus. The catalysed reaction is ATP + H2O = ADP + phosphate + H(+). Its function is as follows. ATP-binding RNA helicase involved in the biogenesis of 60S ribosomal subunits and is required for the normal formation of 25S and 5.8S rRNAs. The sequence is that of ATP-dependent RNA helicase dbp6 (dbp6) from Schizosaccharomyces pombe (strain 972 / ATCC 24843) (Fission yeast).